The sequence spans 198 residues: Nucleoid occlusion factor SlmA (198 aa).

Positions 10-70 constitute an HTH tetR-type domain; the sequence is NRREEILQSL…SLIEFIEDSL (61 aa). Positions 33–52 form a DNA-binding region, H-T-H motif; it reads TTAKLAASVGVSEAALYRHF. Residues 117–144 are a coiled coil; it reads EQDRLQGRINQLFERIEAQLRQVLREKR.

This sequence belongs to the nucleoid occlusion factor SlmA family. Homodimer. Interacts with FtsZ.

The protein localises to the cytoplasm. It localises to the nucleoid. Its function is as follows. Required for nucleoid occlusion (NO) phenomenon, which prevents Z-ring formation and cell division over the nucleoid. Acts as a DNA-associated cell division inhibitor that binds simultaneously chromosomal DNA and FtsZ, and disrupts the assembly of FtsZ polymers. SlmA-DNA-binding sequences (SBS) are dispersed on non-Ter regions of the chromosome, preventing FtsZ polymerization at these regions. The chain is Nucleoid occlusion factor SlmA from Salmonella typhi.